A 537-amino-acid polypeptide reads, in one-letter code: Extracellular exo-inulinase (537 aa).

A signal peptide spans 1–19 (MAPLSKALSVFMLMGITYA). Residues N40 and D41 each contribute to the beta-D-fructose site. D41 functions as the Nucleophile in the catalytic mechanism. A glycan (N-linked (GlcNAc...) asparagine) is linked at N49. The beta-D-fructose site is built by Q57 and W65. Residue N67 is glycosylated (N-linked (GlcNAc...) asparagine). Position 103 (S103) interacts with beta-D-fructose. N-linked (GlcNAc...) asparagine glycosylation is found at N111 and N112. 3 residues coordinate beta-D-fructose: R188, D189, and E241. E241 serves as the catalytic Proton donor/acceptor. 2 N-linked (GlcNAc...) asparagine glycosylation sites follow: N254 and N300. W335 lines the beta-D-fructose pocket. 2 N-linked (GlcNAc...) asparagine glycosylation sites follow: N398 and N430.

This sequence belongs to the glycosyl hydrolase 32 family.

The protein localises to the secreted. The catalysed reaction is Hydrolysis of terminal, non-reducing (2-&gt;1)- and (2-&gt;6)-linked beta-D-fructofuranose residues in fructans.. In terms of biological role, exo-inulinase involved in utilization of the plant storage polymer inulin, consisting of fructooligosaccharides with a degree of polymerization (DP) value from 2 to 60. Splits off terminal fructose units successively from the non-reducing end of the inulin molecule, and also hydrolyzes levan, stachyose and raffinose. Hydrolyzes both beta-2,1- as well as beta-2,6-fructosyl linkages in fructooligosaccharides. The polypeptide is Extracellular exo-inulinase (Aspergillus awamori (Black koji mold)).